We begin with the raw amino-acid sequence, 206 residues long: GTP cyclohydrolase 1 (206 aa).

Zn(2+) contacts are provided by Cys-97, His-100, and Cys-168.

This sequence belongs to the GTP cyclohydrolase I family. Toroid-shaped homodecamer, composed of two pentamers of five dimers.

The catalysed reaction is GTP + H2O = 7,8-dihydroneopterin 3'-triphosphate + formate + H(+). Its pathway is cofactor biosynthesis; 7,8-dihydroneopterin triphosphate biosynthesis; 7,8-dihydroneopterin triphosphate from GTP: step 1/1. The sequence is that of GTP cyclohydrolase 1 from Chromobacterium violaceum (strain ATCC 12472 / DSM 30191 / JCM 1249 / CCUG 213 / NBRC 12614 / NCIMB 9131 / NCTC 9757 / MK).